A 121-amino-acid polypeptide reads, in one-letter code: Anther-specific protein SF2 (121 aa).

The N-terminal stretch at 1-21 is a signal peptide; it reads MANNSVSYLVLLLLVFVLAIS. The N-linked (GlcNAc...) asparagine glycan is linked to Asn115.

As to expression, epidermal anther cells.

Its subcellular location is the secreted. The protein localises to the cell wall. Anther-specific cell wall protein which could contribute to the cell wall architecture of epidermal anther cells via intermolecular disulfide bridges. The chain is Anther-specific protein SF2 from Helianthus annuus (Common sunflower).